We begin with the raw amino-acid sequence, 155 residues long: 6,7-dimethyl-8-ribityllumazine synthase (155 aa).

5-amino-6-(D-ribitylamino)uracil is bound by residues Phe26, 60–62, and 84–86; these read ALE and AVI. Residue 89 to 90 coordinates (2S)-2-hydroxy-3-oxobutyl phosphate; that stretch reads ET. The active-site Proton donor is His92. Asn117 provides a ligand contact to 5-amino-6-(D-ribitylamino)uracil. Arg131 lines the (2S)-2-hydroxy-3-oxobutyl phosphate pocket.

The protein belongs to the DMRL synthase family.

It catalyses the reaction (2S)-2-hydroxy-3-oxobutyl phosphate + 5-amino-6-(D-ribitylamino)uracil = 6,7-dimethyl-8-(1-D-ribityl)lumazine + phosphate + 2 H2O + H(+). Its pathway is cofactor biosynthesis; riboflavin biosynthesis; riboflavin from 2-hydroxy-3-oxobutyl phosphate and 5-amino-6-(D-ribitylamino)uracil: step 1/2. Its function is as follows. Catalyzes the formation of 6,7-dimethyl-8-ribityllumazine by condensation of 5-amino-6-(D-ribitylamino)uracil with 3,4-dihydroxy-2-butanone 4-phosphate. This is the penultimate step in the biosynthesis of riboflavin. This is 6,7-dimethyl-8-ribityllumazine synthase from Chromobacterium violaceum (strain ATCC 12472 / DSM 30191 / JCM 1249 / CCUG 213 / NBRC 12614 / NCIMB 9131 / NCTC 9757 / MK).